The chain runs to 217 residues: Killer cell lectin-like receptor subfamily B member 1F (217 aa).

The Cytoplasmic portion of the chain corresponds to 1 to 45; sequence MDTSKVHGNVKPFRCPGYKQASSPSFSPDACRCPHWHHLALKSGC. The short motif at 31-34 is the LCK-binding motif element; it reads CRCP. A helical; Signal-anchor for type II membrane protein transmembrane segment spans residues 46–66; it reads AGLILLLLSLIGLSVLVRFLV. Topologically, residues 67–217 are extracellular; the sequence is QKPPIEKCSV…WICQKTLIHV (151 aa). An N-linked (GlcNAc...) asparagine glycan is attached at Asn81. The C-type lectin domain maps to 101–211; the sequence is HWNKCLFVSQ…CSSDNHWICQ (111 aa). Intrachain disulfides connect Cys122-Cys210 and Cys189-Cys202.

Highly expressed in dendritic cells. Detectable in natural killer cells.

The protein localises to the membrane. Its function is as follows. Binds CLEC2I/Clr-g leading to activation of natural killer cells or costimulation of IL-2 production and proliferation of T-cells in response to antigen stimulation. May contribute to the formation of the immunological synapse between T-cells and antigen-presenting dendritic cells. This is Killer cell lectin-like receptor subfamily B member 1F (Klrb1f) from Mus musculus (Mouse).